A 224-amino-acid polypeptide reads, in one-letter code: Octanoyltransferase (224 aa).

The region spanning 29–224 is the BPL/LPL catalytic domain; that stretch reads PGTPDELWLC…GDRLESYLSP (196 aa). Substrate-binding positions include 68-75, 157-159, and 170-172; these read RGGQVTYH, ALG, and GLA. The active-site Acyl-thioester intermediate is the cysteine 188.

This sequence belongs to the LipB family.

It is found in the cytoplasm. The enzyme catalyses octanoyl-[ACP] + L-lysyl-[protein] = N(6)-octanoyl-L-lysyl-[protein] + holo-[ACP] + H(+). It participates in protein modification; protein lipoylation via endogenous pathway; protein N(6)-(lipoyl)lysine from octanoyl-[acyl-carrier-protein]: step 1/2. Catalyzes the transfer of endogenously produced octanoic acid from octanoyl-acyl-carrier-protein onto the lipoyl domains of lipoate-dependent enzymes. Lipoyl-ACP can also act as a substrate although octanoyl-ACP is likely to be the physiological substrate. This chain is Octanoyltransferase, found in Methylibium petroleiphilum (strain ATCC BAA-1232 / LMG 22953 / PM1).